Here is a 193-residue protein sequence, read N- to C-terminus: Ion-translocating oxidoreductase complex subunit A (193 aa).

6 consecutive transmembrane segments (helical) span residues Leu5–Leu25, Met39–Ile59, Ile63–Val83, Leu102–Leu122, Ala134–Ile154, and Ala171–Val191.

This sequence belongs to the NqrDE/RnfAE family. As to quaternary structure, the complex is composed of six subunits: RsxA, RsxB, RsxC, RsxD, RsxE and RsxG.

Its subcellular location is the cell inner membrane. In terms of biological role, part of a membrane-bound complex that couples electron transfer with translocation of ions across the membrane. Required to maintain the reduced state of SoxR. The polypeptide is Ion-translocating oxidoreductase complex subunit A (Escherichia fergusonii (strain ATCC 35469 / DSM 13698 / CCUG 18766 / IAM 14443 / JCM 21226 / LMG 7866 / NBRC 102419 / NCTC 12128 / CDC 0568-73)).